The primary structure comprises 493 residues: Lysine--tRNA ligase (493 aa).

Mg(2+)-binding residues include glutamate 404 and glutamate 411.

Belongs to the class-II aminoacyl-tRNA synthetase family. Homodimer. Mg(2+) is required as a cofactor.

It localises to the cytoplasm. The catalysed reaction is tRNA(Lys) + L-lysine + ATP = L-lysyl-tRNA(Lys) + AMP + diphosphate. This Oceanobacillus iheyensis (strain DSM 14371 / CIP 107618 / JCM 11309 / KCTC 3954 / HTE831) protein is Lysine--tRNA ligase.